The following is an 857-amino-acid chain: Glucans biosynthesis glucosyltransferase H (857 aa).

A run of 6 helical transmembrane segments spans residues 142–162 (ILLT…KGIL), 196–216 (ILIL…TALM), 515–535 (VFLT…FLVL), 572–592 (LFST…ILIW), 606–626 (TLSM…RMIF), and 682–702 (FLWW…VSVI).

This sequence belongs to the glycosyltransferase 2 family. OpgH subfamily.

The protein localises to the cell inner membrane. It functions in the pathway glycan metabolism; osmoregulated periplasmic glucan (OPG) biosynthesis. Its function is as follows. Involved in the biosynthesis of osmoregulated periplasmic glucans (OPGs). The sequence is that of Glucans biosynthesis glucosyltransferase H from Pseudomonas putida (strain W619).